Reading from the N-terminus, the 305-residue chain is Autophagy-related protein 14 (305 aa).

Residues 34–147 (KMNLLILRQE…LDTLSHILAR (114 aa)) adopt a coiled-coil conformation.

The protein belongs to the ATG14 family. In terms of assembly, component of the autophagy-specific VPS34 PI3-kinase complex I.

The protein resides in the preautophagosomal structure membrane. It localises to the vacuole membrane. Required for cytoplasm to vacuole transport (Cvt) and autophagy as a part of the autophagy-specific VPS34 PI3-kinase complex I. This complex is essential to recruit the ATG8-phosphatidylinositol conjugate and the ATG12-ATG5 conjugate to the pre-autophagosomal structure. ATG14 mediates the specific binding of the VPS34 PI3-kinase complex I to the preautophagosomal structure (PAS). In Kluyveromyces marxianus (strain DMKU3-1042 / BCC 29191 / NBRC 104275) (Yeast), this protein is Autophagy-related protein 14.